Consider the following 637-residue polypeptide: Transcription termination factor FttA (637 aa).

Residues 4–71 (EDVLLDLKHK…IAMRPDPRVL (68 aa)) form a KHa region. The KHb stretch occupies residues 72-139 (ATPEDSISII…WIPKVVRTPP (68 aa)). Residues 180–383 (WVRVTALGGC…VISEATYGNA (204 aa)) are metallo-beta-lactamase N-terminus. 6 residues coordinate Zn(2+): histidine 242, histidine 244, aspartate 246, histidine 247, histidine 329, and aspartate 352. Residues 384 to 578 (NAFQPALKDA…MEVQVVDGFS (195 aa)) are beta-Casp. The interval 579–637 (GHSDRRQLMEYVKRMQPRPERVFTEHGDEKACVDLASSVYKKLKIETRALTNLETVRLL) is metallo-beta-lactamase C-terminus. Histidine 604 serves as a coordination point for Zn(2+).

Belongs to the metallo-beta-lactamase superfamily. RNA-metabolizing metallo-beta-lactamase-like family. FttA subfamily. Homodimer. Interacts with RNA polymerase (RNAP), interacts with the Spt4-Spt5 complex. It depends on Zn(2+) as a cofactor.

In terms of biological role, terminates transcription on the whole genome. Termination is linked to FttA-mediated RNA cleavage and does not require NTP hydrolysis. Cleaves endonucleolytically at the RNA exit channel of RNA polymerase (RNAP); the 5'-3' exonuclease activity of this protein degrades the nascent RNA released from RNAP. This Methanosarcina mazei (strain ATCC BAA-159 / DSM 3647 / Goe1 / Go1 / JCM 11833 / OCM 88) (Methanosarcina frisia) protein is Transcription termination factor FttA.